A 334-amino-acid polypeptide reads, in one-letter code: PDZ domain-containing protein MAGIX (334 aa).

Basic and acidic residues-rich tracts occupy residues 1–13 and 209–224; these read MEPRTGDAADPRG and LETHPGKPRGVGEPRK. 2 disordered regions span residues 1 to 26 and 209 to 306; these read MEPRTGDAADPRGSRGGRGPSPLAGP and LETH…WLVP. A PDZ domain is found at 125–209; the sequence is SVELVRGYAG…QLHLVIRRPL (85 aa). The segment covering 244–260 has biased composition (polar residues); it reads GSRSSSTSLVQHPPSRT. Ser272 carries the post-translational modification Phosphoserine.

This Homo sapiens (Human) protein is PDZ domain-containing protein MAGIX (MAGIX).